The primary structure comprises 276 residues: NADH-cytochrome b5 reductase 2 (276 aa).

An FAD-binding FR-type domain is found at Glu-15 to Asn-127. Residue Lys-17 is modified to N6-acetyllysine. A Phosphotyrosine modification is found at Tyr-18. FAD-binding positions include Glu-107–Asn-137 and Leu-146–Leu-181.

Belongs to the flavoprotein pyridine nucleotide cytochrome reductase family. The cofactor is FAD.

The enzyme catalyses 2 Fe(III)-[cytochrome b5] + NADH = 2 Fe(II)-[cytochrome b5] + NAD(+) + H(+). Its function is as follows. NADH-cytochrome b5 reductases are involved in desaturation and elongation of fatty acids, cholesterol biosynthesis, drug metabolism, and, in erythrocyte, methemoglobin reduction. Responsible for NADH-dependent lucigenin chemiluminescence in spermatozoa by reducing both lucigenin and 2-[4-iodophenyl]-3-[4-nitrophenyl]-5-[2,4-disulfophenyl]-2H tetrazolium monosodium salt (WST-1). The protein is NADH-cytochrome b5 reductase 2 (Cyb5r2) of Mus musculus (Mouse).